The primary structure comprises 404 residues: Argininosuccinate synthase (404 aa).

ATP-binding positions include 10–18 (AYSGGVDTS) and alanine 38. Position 89 (tyrosine 89) interacts with L-citrulline. ATP is bound at residue glycine 119. L-aspartate contacts are provided by threonine 121, asparagine 125, and aspartate 126. Residue asparagine 125 participates in L-citrulline binding. Residues arginine 129, serine 177, serine 186, glutamate 262, and tyrosine 274 each coordinate L-citrulline.

Belongs to the argininosuccinate synthase family. Type 1 subfamily. Homotetramer.

It localises to the cytoplasm. It catalyses the reaction L-citrulline + L-aspartate + ATP = 2-(N(omega)-L-arginino)succinate + AMP + diphosphate + H(+). It participates in amino-acid biosynthesis; L-arginine biosynthesis; L-arginine from L-ornithine and carbamoyl phosphate: step 2/3. The chain is Argininosuccinate synthase from Prochlorococcus marinus (strain MIT 9215).